The chain runs to 238 residues: Anti-sigma-K factor RskA (238 aa).

Topologically, residues 1-97 (MTSPQNDLLS…RSSSRRRAAA (97 aa)) are cytoplasmic. The helical transmembrane segment at 98-118 (VLSAAAAVVIGLGTLAVGYAL) threads the bilayer. Topologically, residues 119–238 (RPAPTPSTAE…TPVFAELPLT (120 aa)) are extracellular.

Belongs to the anti-sigma-K factor family.

Its subcellular location is the cell membrane. An anti-sigma factor for extracytoplasmic function (ECF) sigma factor SigK. ECF sigma factors are held in an inactive form by an anti-sigma factor until released by regulated intramembrane proteolysis (RIP). RIP occurs when an extracytoplasmic signal triggers a concerted proteolytic cascade to transmit information and elicit cellular responses. The membrane-spanning regulatory substrate protein is first cut extracytoplasmically (site-1 protease, S1P), then within the membrane itself (site-2 protease, S2P, Rip1), while cytoplasmic proteases finish degrading the regulatory protein, liberating the sigma factor. The sequence is that of Anti-sigma-K factor RskA (rskA) from Mycolicibacterium vanbaalenii (strain DSM 7251 / JCM 13017 / BCRC 16820 / KCTC 9966 / NRRL B-24157 / PYR-1) (Mycobacterium vanbaalenii).